The sequence spans 277 residues: Putative protease slr0021 (277 aa).

The active-site Nucleophile is the Ser-85. Lys-137 functions as the Proton donor/acceptor in the catalytic mechanism.

This sequence belongs to the peptidase S49 family.

The sequence is that of Putative protease slr0021 from Synechocystis sp. (strain ATCC 27184 / PCC 6803 / Kazusa).